The primary structure comprises 1226 residues: Probable phosphorylase b kinase regulatory subunit alpha (1226 aa).

The tract at residues 666–688 (NEKITTPRGPRTLRRGESVKDRS) is disordered. A compositionally biased stretch (basic and acidic residues) spans 679 to 688 (RRGESVKDRS).

Belongs to the phosphorylase b kinase regulatory chain family.

Its pathway is glycan biosynthesis; glycogen metabolism. Its function is as follows. Phosphorylase b kinase catalyzes the phosphorylation of serine in certain substrates, including troponin I. The alpha chain may bind calmodulin. The chain is Probable phosphorylase b kinase regulatory subunit alpha from Caenorhabditis elegans.